A 107-amino-acid chain; its full sequence is UPF0060 membrane protein Atu1058 (107 aa).

The next 4 helical transmembrane spans lie at 5-25 (LIYV…WAWL), 32-52 (WILL…TLVA), 59-79 (AYAA…WGVE), and 85-105 (RWDI…LFGP).

Belongs to the UPF0060 family.

It is found in the cell inner membrane. The protein is UPF0060 membrane protein Atu1058 of Agrobacterium fabrum (strain C58 / ATCC 33970) (Agrobacterium tumefaciens (strain C58)).